Consider the following 100-residue polypeptide: NADH-quinone oxidoreductase subunit K (100 aa).

3 helical membrane-spanning segments follow: residues 1–21 (MIGL…GLAG), 28–48 (ILLL…GFVA), and 64–84 (FIIA…ILWF).

The protein belongs to the complex I subunit 4L family. As to quaternary structure, NDH-1 is composed of 14 different subunits. Subunits NuoA, H, J, K, L, M, N constitute the membrane sector of the complex.

The protein localises to the cell inner membrane. The enzyme catalyses a quinone + NADH + 5 H(+)(in) = a quinol + NAD(+) + 4 H(+)(out). In terms of biological role, NDH-1 shuttles electrons from NADH, via FMN and iron-sulfur (Fe-S) centers, to quinones in the respiratory chain. The immediate electron acceptor for the enzyme in this species is believed to be ubiquinone. Couples the redox reaction to proton translocation (for every two electrons transferred, four hydrogen ions are translocated across the cytoplasmic membrane), and thus conserves the redox energy in a proton gradient. This is NADH-quinone oxidoreductase subunit K from Helicobacter pylori (strain P12).